The chain runs to 275 residues: Dermonecrotic toxin LamSicTox-alphaIV1i (275 aa).

His5 is a catalytic residue. Residues Glu25 and Asp27 each contribute to the Mg(2+) site. The Nucleophile role is filled by His41. 2 cysteine pairs are disulfide-bonded: Cys45-Cys51 and Cys47-Cys192. Asp85 serves as a coordination point for Mg(2+).

It belongs to the arthropod phospholipase D family. Class II subfamily. Mg(2+) serves as cofactor. Expressed by the venom gland.

Its subcellular location is the secreted. The catalysed reaction is an N-(acyl)-sphingosylphosphocholine = an N-(acyl)-sphingosyl-1,3-cyclic phosphate + choline. It catalyses the reaction an N-(acyl)-sphingosylphosphoethanolamine = an N-(acyl)-sphingosyl-1,3-cyclic phosphate + ethanolamine. It carries out the reaction a 1-acyl-sn-glycero-3-phosphocholine = a 1-acyl-sn-glycero-2,3-cyclic phosphate + choline. The enzyme catalyses a 1-acyl-sn-glycero-3-phosphoethanolamine = a 1-acyl-sn-glycero-2,3-cyclic phosphate + ethanolamine. Dermonecrotic toxins cleave the phosphodiester linkage between the phosphate and headgroup of certain phospholipids (sphingolipid and lysolipid substrates), forming an alcohol (often choline) and a cyclic phosphate. This toxin acts on sphingomyelin (SM). It may also act on ceramide phosphoethanolamine (CPE), lysophosphatidylcholine (LPC) and lysophosphatidylethanolamine (LPE), but not on lysophosphatidylserine (LPS), and lysophosphatidylglycerol (LPG). It acts by transphosphatidylation, releasing exclusively cyclic phosphate products as second products. Induces dermonecrosis, hemolysis, increased vascular permeability, edema, inflammatory response, and platelet aggregation. The sequence is that of Dermonecrotic toxin LamSicTox-alphaIV1i from Loxosceles amazonica (Recluse spider).